The primary structure comprises 98 residues: DNA-directed RNA polymerase subunit omega (98 aa).

This sequence belongs to the RNA polymerase subunit omega family. The RNAP catalytic core consists of 2 alpha, 1 beta, 1 beta' and 1 omega subunit. When a sigma factor is associated with the core the holoenzyme is formed, which can initiate transcription.

It catalyses the reaction RNA(n) + a ribonucleoside 5'-triphosphate = RNA(n+1) + diphosphate. In terms of biological role, promotes RNA polymerase assembly. Latches the N- and C-terminal regions of the beta' subunit thereby facilitating its interaction with the beta and alpha subunits. In Tropheryma whipplei (strain Twist) (Whipple's bacillus), this protein is DNA-directed RNA polymerase subunit omega.